The chain runs to 339 residues: DNA-directed RNA polymerase subunit alpha (339 aa).

Positions 1-235 are alpha N-terminal domain (alpha-NTD); sequence MTIQKNWQEL…DQLNVFVNFE (235 aa). The alpha C-terminal domain (alpha-CTD) stretch occupies residues 251–339; that stretch reads FNPAFLKKVD…ELAKRFEDHY (89 aa).

Belongs to the RNA polymerase alpha chain family. In terms of assembly, homodimer. The RNAP catalytic core consists of 2 alpha, 1 beta, 1 beta' and 1 omega subunit. When a sigma factor is associated with the core the holoenzyme is formed, which can initiate transcription.

It catalyses the reaction RNA(n) + a ribonucleoside 5'-triphosphate = RNA(n+1) + diphosphate. Functionally, DNA-dependent RNA polymerase catalyzes the transcription of DNA into RNA using the four ribonucleoside triphosphates as substrates. The polypeptide is DNA-directed RNA polymerase subunit alpha (Rhodopseudomonas palustris (strain BisB18)).